Here is a 412-residue protein sequence, read N- to C-terminus: Acetylornithine aminotransferase (412 aa).

Pyridoxal 5'-phosphate-binding positions include 109-110 (GA) and F142. Residue R145 participates in N(2)-acetyl-L-ornithine binding. 233 to 236 (DEVQ) serves as a coordination point for pyridoxal 5'-phosphate. K262 carries the post-translational modification N6-(pyridoxal phosphate)lysine. S289 is a binding site for N(2)-acetyl-L-ornithine. Residue T290 participates in pyridoxal 5'-phosphate binding.

It belongs to the class-III pyridoxal-phosphate-dependent aminotransferase family. ArgD subfamily. As to quaternary structure, homodimer. Requires pyridoxal 5'-phosphate as cofactor.

It is found in the cytoplasm. It carries out the reaction N(2)-acetyl-L-ornithine + 2-oxoglutarate = N-acetyl-L-glutamate 5-semialdehyde + L-glutamate. Its pathway is amino-acid biosynthesis; L-arginine biosynthesis; N(2)-acetyl-L-ornithine from L-glutamate: step 4/4. This chain is Acetylornithine aminotransferase, found in Thermosynechococcus vestitus (strain NIES-2133 / IAM M-273 / BP-1).